Reading from the N-terminus, the 228-residue chain is Endolytic peptidoglycan transglycosylase RlpA (228 aa).

Positions 1-23 are cleaved as a signal peptide; it reads MIQRHKLIVLIFLLIFCLSGCNT.

It belongs to the RlpA family.

Its function is as follows. Lytic transglycosylase with a strong preference for naked glycan strands that lack stem peptides. The chain is Endolytic peptidoglycan transglycosylase RlpA from Rickettsia felis (strain ATCC VR-1525 / URRWXCal2) (Rickettsia azadi).